We begin with the raw amino-acid sequence, 275 residues long: Dermonecrotic toxin SpeSicTox-betaIIA3i (275 aa).

The active site involves histidine 5. Mg(2+)-binding residues include glutamate 25 and aspartate 27. Histidine 41 acts as the Nucleophile in catalysis. 2 disulfides stabilise this stretch: cysteine 45–cysteine 51 and cysteine 47–cysteine 190. Residue aspartate 85 participates in Mg(2+) binding.

This sequence belongs to the arthropod phospholipase D family. Class II subfamily. It depends on Mg(2+) as a cofactor. In terms of tissue distribution, expressed by the venom gland.

Its subcellular location is the secreted. The enzyme catalyses an N-(acyl)-sphingosylphosphocholine = an N-(acyl)-sphingosyl-1,3-cyclic phosphate + choline. It catalyses the reaction an N-(acyl)-sphingosylphosphoethanolamine = an N-(acyl)-sphingosyl-1,3-cyclic phosphate + ethanolamine. It carries out the reaction a 1-acyl-sn-glycero-3-phosphocholine = a 1-acyl-sn-glycero-2,3-cyclic phosphate + choline. The catalysed reaction is a 1-acyl-sn-glycero-3-phosphoethanolamine = a 1-acyl-sn-glycero-2,3-cyclic phosphate + ethanolamine. Functionally, dermonecrotic toxins cleave the phosphodiester linkage between the phosphate and headgroup of certain phospholipids (sphingolipid and lysolipid substrates), forming an alcohol (often choline) and a cyclic phosphate. This toxin acts on sphingomyelin (SM). It may also act on ceramide phosphoethanolamine (CPE), lysophosphatidylcholine (LPC) and lysophosphatidylethanolamine (LPE), but not on lysophosphatidylserine (LPS), and lysophosphatidylglycerol (LPG). It acts by transphosphatidylation, releasing exclusively cyclic phosphate products as second products. Induces dermonecrosis, hemolysis, increased vascular permeability, edema, inflammatory response, and platelet aggregation. The sequence is that of Dermonecrotic toxin SpeSicTox-betaIIA3i from Sicarius peruensis (Six-eyed sand spider).